The following is a 377-amino-acid chain: TraB domain-containing protein (377 aa).

Position 1 is an N-acetylmethionine (M1). The interval 1 to 34 is disordered; the sequence is MEEPEEQPPHEADTEPVVTSGASEAVPRVLPGDP. T65 carries the post-translational modification Phosphothreonine.

The polypeptide is TraB domain-containing protein (TRABD) (Bos taurus (Bovine)).